The following is a 547-amino-acid chain: Elongator complex protein 3 (547 aa).

Positions 82-372 constitute a Radical SAM core domain; the sequence is RTASGIAVVA…YRVQRDIPMP (291 aa). Cys99, Cys109, and Cys112 together coordinate [4Fe-4S] cluster. Ser161 carries the post-translational modification Phosphoserine. Lys164 lines the acetyl-CoA pocket. Residue Tyr202 is modified to Phosphotyrosine; by ALK. Lys229 is subject to N6-methyllysine. Tyr251 carries the post-translational modification Phosphotyrosine. In terms of domain architecture, N-acetyltransferase spans 396-547; that stretch reads IQCRDVRTRE…QGPYMVKMLK (152 aa). Acetyl-CoA is bound by residues 474–477, 497–499, and Tyr530; these read ELHV and FGM.

It belongs to the ELP3 family. Component of the elongator complex which consists of ELP1, ELP2, ELP3, ELP4, ELP5 and ELP6. ELP1, ELP2 and ELP3 form the elongator core complex. Interacts with alpha-tubulin. [4Fe-4S] cluster is required as a cofactor. Tyrosine-phosphorylated; phosphorylation on Tyr-202 does not affect elongator complex integrity or ELP3 protein stability. Also serine/threonine-phosphorylated. As to expression, expressed in the cerebellum and spinal motor neurons.

It localises to the cytoplasm. The protein localises to the nucleus. It catalyses the reaction uridine(34) in tRNA + acetyl-CoA + S-adenosyl-L-methionine + H2O = 5-(carboxymethyl)uridine(34) in tRNA + 5'-deoxyadenosine + L-methionine + CoA + 2 H(+). It participates in tRNA modification; 5-methoxycarbonylmethyl-2-thiouridine-tRNA biosynthesis. Its function is as follows. Catalytic tRNA acetyltransferase subunit of the elongator complex which is required for multiple tRNA modifications, including mcm5U (5-methoxycarbonylmethyl uridine), mcm5s2U (5-methoxycarbonylmethyl-2-thiouridine), and ncm5U (5-carbamoylmethyl uridine). In the elongator complex, acts as a tRNA uridine(34) acetyltransferase by mediating formation of carboxymethyluridine in the wobble base at position 34 in tRNAs. May also act as a protein lysine acetyltransferase by mediating acetylation of target proteins; such activity is however unclear in vivo and recent evidences suggest that ELP3 primarily acts as a tRNA acetyltransferase. Involved in neurogenesis: regulates the migration and branching of projection neurons in the developing cerebral cortex, through a process depending on alpha-tubulin acetylation. Required for acetylation of GJA1 in the developing cerebral cortex. The protein is Elongator complex protein 3 of Homo sapiens (Human).